Reading from the N-terminus, the 115-residue chain is Large ribosomal subunit protein bL19 (115 aa).

Belongs to the bacterial ribosomal protein bL19 family.

In terms of biological role, this protein is located at the 30S-50S ribosomal subunit interface and may play a role in the structure and function of the aminoacyl-tRNA binding site. The sequence is that of Large ribosomal subunit protein bL19 from Parabacteroides distasonis (strain ATCC 8503 / DSM 20701 / CIP 104284 / JCM 5825 / NCTC 11152).